The following is a 301-amino-acid chain: 2-phosphoglycerate kinase (301 aa).

In terms of domain architecture, ATP-cone spans 2–89; sequence IRVIEKGDKV…FWRRFRKMKV (88 aa).

This sequence belongs to the 2-phosphoglycerate kinase family. A divalent metal cation serves as cofactor.

It catalyses the reaction (2R)-2-phosphoglycerate + ATP = (2R)-2,3-bisphosphoglycerate + ADP + H(+). It participates in thermoadapter biosynthesis; cyclic 2,3-diphosphoglycerate biosynthesis; cyclic 2,3-diphosphoglycerate from 2-phospho-D-glycerate: step 1/2. In terms of biological role, catalyzes the phosphorylation of 2-phosphoglycerate to 2,3-diphosphoglycerate. Involved in the biosynthesis of cyclic 2,3-bisphosphoglycerate, a thermoprotectant. In Pyrococcus horikoshii (strain ATCC 700860 / DSM 12428 / JCM 9974 / NBRC 100139 / OT-3), this protein is 2-phosphoglycerate kinase.